Consider the following 102-residue polypeptide: Keratin-associated protein 25-1 (102 aa).

This sequence belongs to the PMG family. In terms of assembly, interacts with hair keratins.

In terms of biological role, in the hair cortex, hair keratin intermediate filaments are embedded in an interfilamentous matrix, consisting of hair keratin-associated proteins (KRTAP), which are essential for the formation of a rigid and resistant hair shaft through their extensive disulfide bond cross-linking with abundant cysteine residues of hair keratins. The matrix proteins include the high-sulfur and high-glycine-tyrosine keratins. The protein is Keratin-associated protein 25-1 (KRTAP25-1) of Homo sapiens (Human).